Consider the following 430-residue polypeptide: Serine--tRNA ligase (430 aa).

237–239 contributes to the L-serine binding site; the sequence is TAE. An ATP-binding site is contributed by 268-270; that stretch reads RSE. An L-serine-binding site is contributed by glutamate 291. 355-358 is a binding site for ATP; that stretch reads EISS. Serine 391 is a binding site for L-serine.

This sequence belongs to the class-II aminoacyl-tRNA synthetase family. Type-1 seryl-tRNA synthetase subfamily. Homodimer. The tRNA molecule binds across the dimer.

It is found in the cytoplasm. It carries out the reaction tRNA(Ser) + L-serine + ATP = L-seryl-tRNA(Ser) + AMP + diphosphate + H(+). The enzyme catalyses tRNA(Sec) + L-serine + ATP = L-seryl-tRNA(Sec) + AMP + diphosphate + H(+). It participates in aminoacyl-tRNA biosynthesis; selenocysteinyl-tRNA(Sec) biosynthesis; L-seryl-tRNA(Sec) from L-serine and tRNA(Sec): step 1/1. Catalyzes the attachment of serine to tRNA(Ser). Is also able to aminoacylate tRNA(Sec) with serine, to form the misacylated tRNA L-seryl-tRNA(Sec), which will be further converted into selenocysteinyl-tRNA(Sec). The protein is Serine--tRNA ligase of Klebsiella pneumoniae (strain 342).